We begin with the raw amino-acid sequence, 1488 residues long: Phenolphthiocerol/phthiocerol polyketide synthase subunit E (1488 aa).

The 434-residue stretch at 5–438 (ENAIAVVGMA…GTNAHVVLEE (434 aa)) folds into the Ketosynthase family 3 (KS3) domain. Active-site for beta-ketoacyl synthase activity residues include cysteine 184, histidine 320, and histidine 361. The interval 551–868 (VFLFPGQGAQ…GELWSAGVEV (318 aa)) is acyltransferase. Catalysis depends on serine 641, which acts as the For malonyltransferase activity. The Carrier domain occupies 930 to 1004 (NGESQTEVTL…SLTAAVDASF (75 aa)). Serine 965 carries the O-(pantetheine 4'-phosphoryl)serine modification. 1286 to 1331 (EGVVAVELEGEGRSVLRPDVDLRRTVGWFTTYYPVPLACATGLGAL) contacts NADP(+).

NADP(+) is required as a cofactor. Pantetheine 4'-phosphate serves as cofactor.

The enzyme catalyses icosanoyl-[(phenol)carboxyphthiodiolenone synthase] + 2 (S)-methylmalonyl-CoA + 3 malonyl-CoA + 5 NADPH + 10 H(+) = C32-carboxyphthiodiolenone-[(phenol)carboxyphthiodiolenone synthase] + 5 CO2 + 5 NADP(+) + 5 CoA + 2 H2O. The catalysed reaction is docosanoyl-[(phenol)carboxyphthiodiolenone synthase] + 2 (S)-methylmalonyl-CoA + 3 malonyl-CoA + 5 NADPH + 10 H(+) = C34-carboxyphthiodiolenone-[(phenol)carboxyphthiodiolenone synthase] + 5 CO2 + 5 NADP(+) + 5 CoA + 2 H2O. It carries out the reaction 17-(4-hydroxyphenyl)heptadecanoyl-[(phenol)carboxyphthiodiolenone synthase] + 2 (S)-methylmalonyl-CoA + 3 malonyl-CoA + 5 NADPH + 10 H(+) = C35-(phenol)carboxyphthiodiolenone-[(phenol)carboxyphthiodiolenone synthase] + 5 CO2 + 5 NADP(+) + 5 CoA + 2 H2O. It catalyses the reaction 19-(4-hydroxyphenyl)nonadecanoyl-[(phenol)carboxyphthiodiolenone synthase] + 2 (S)-methylmalonyl-CoA + 3 malonyl-CoA + 5 NADPH + 10 H(+) = C37-(phenol)carboxyphthiodiolenone-[(phenol)carboxyphthiodiolenone synthase] + 5 CO2 + 5 NADP(+) + 5 CoA + 2 H2O. It functions in the pathway lipid metabolism; fatty acid biosynthesis. In terms of biological role, part of the PpsABCDE complex involved in the biosynthesis of the lipid core common to phthiocerols and phenolphthiocerols by successive additions of malonyl-CoA or methylmalonyl-CoA extender units. PpsA can accept as substrate the activated forms of either icosanoyl (C20), docosanoyl (C22) or lignoceroyl (C24) groups from FadD26, or a (4-hydroxyphenyl)-C17 or (4-hydroxyphenyl)-C19 fatty acyl from FadD29. PpsA initiates the biosynthesis and extends its substrate using a malonyl-CoA extender unit. The PpsB and PpsC proteins add the second and third malonyl-CoA extender units. PpsD adds an (R)-methylmalonyl unit and PpsE adds a second (R)-methylmalonyl unit. The incorporation of the methylmalonyl units results in formation of two branched methyl groups in the elongated product. The sequence is that of Phenolphthiocerol/phthiocerol polyketide synthase subunit E (ppsE) from Mycobacterium tuberculosis (strain CDC 1551 / Oshkosh).